We begin with the raw amino-acid sequence, 268 residues long: Acidic leucine-rich nuclear phosphoprotein 32 family member E (268 aa).

The residue at position 1 (M1) is an N-acetylmethionine. LRR repeat units lie at residues 18 to 38 (EVTE…EGLN), 43 to 64 (ELEF…PSLN), 65 to 87 (KLRK…AEKC), and 89 to 110 (NLTY…EALQ). A Glycyl lysine isopeptide (Lys-Gly) (interchain with G-Cter in SUMO2) cross-link involves residue K68. Positions 123–161 (CEITNLEDYRESIFELLQQITYLDGFDQEDNEAPDSEEE) constitute an LRRCT domain. Composition is skewed to acidic residues over residues 149 to 216 (DQED…EEEV) and 226 to 247 (IQDE…EEEE). Residues 149–268 (DQEDNEAPDS…AEDDGEEEDD (120 aa)) are disordered. Residues 215–268 (EVGLSYLMKEEIQDEEDDDDYVEEGEEEEEEEEGGLRGEKRKRDAEDDGEEEDD) are ZID domain. Basic and acidic residues predominate over residues 248 to 259 (GGLRGEKRKRDA).

It belongs to the ANP32 family. In terms of assembly, interacts with the importin alpha KPNA1 and KPNA2. Component of a SWR1-like complex, composed of EP400, KAT5/TIP60, TRRAP, BRD8, RUVBL1, RUVBL2, ING3 and ANP32E; the complex does not contain SRCAP. Interacts with H2A.Z/H2AZ1. In terms of processing, phosphorylated. The phosphorylation is nuclear localization signal (NLS)-dependent. Expressed in peripheral blood leukocytes, colon, small intestine, prostate, thymus, spleen, skeletal muscle, liver and kidney.

It is found in the cytoplasm. The protein localises to the nucleus. In terms of biological role, histone chaperone that specifically mediates the genome-wide removal of histone H2A.Z/H2AZ1 from the nucleosome: removes H2A.Z/H2AZ1 from its normal sites of deposition, especially from enhancer and insulator regions. Not involved in deposition of H2A.Z/H2AZ1 in the nucleosome. May stabilize the evicted H2A.Z/H2AZ1-H2B dimer, thus shifting the equilibrium towards dissociation and the off-chromatin state. Inhibits activity of protein phosphatase 2A (PP2A). Does not inhibit protein phosphatase 1. May play a role in cerebellar development and synaptogenesis. The sequence is that of Acidic leucine-rich nuclear phosphoprotein 32 family member E (ANP32E) from Homo sapiens (Human).